The sequence spans 140 residues: Small ribosomal subunit protein uS12 (140 aa).

A 3-methylthioaspartic acid modification is found at aspartate 102. The segment at alanine 121–lysine 140 is disordered. Basic residues predominate over residues tyrosine 130–lysine 140.

This sequence belongs to the universal ribosomal protein uS12 family. As to quaternary structure, part of the 30S ribosomal subunit. Contacts proteins S8 and S17. May interact with IF1 in the 30S initiation complex.

In terms of biological role, with S4 and S5 plays an important role in translational accuracy. Interacts with and stabilizes bases of the 16S rRNA that are involved in tRNA selection in the A site and with the mRNA backbone. Located at the interface of the 30S and 50S subunits, it traverses the body of the 30S subunit contacting proteins on the other side and probably holding the rRNA structure together. The combined cluster of proteins S8, S12 and S17 appears to hold together the shoulder and platform of the 30S subunit. The polypeptide is Small ribosomal subunit protein uS12 (Alkaliphilus oremlandii (strain OhILAs) (Clostridium oremlandii (strain OhILAs))).